We begin with the raw amino-acid sequence, 145 residues long: Large ribosomal subunit protein uL11 (145 aa).

Belongs to the universal ribosomal protein uL11 family. In terms of assembly, part of the ribosomal stalk of the 50S ribosomal subunit. Interacts with L10 and the large rRNA to form the base of the stalk. L10 forms an elongated spine to which L12 dimers bind in a sequential fashion forming a multimeric L10(L12)X complex. One or more lysine residues are methylated.

Its function is as follows. Forms part of the ribosomal stalk which helps the ribosome interact with GTP-bound translation factors. The polypeptide is Large ribosomal subunit protein uL11 (Rickettsia akari (strain Hartford)).